A 320-amino-acid chain; its full sequence is Adhesin MafA 1 (320 aa).

An N-terminal signal peptide occupies residues 1–18; it reads MQARLLIPILFSVFILSA. Cysteine 19 is lipidated: N-palmitoyl cysteine. Cysteine 19 is lipidated: S-diacylglycerol cysteine. A disordered region spans residues 288–320; it reads HMGNSAPSVEADNSHEGYGYSDEAVRRHRQGQP.

Belongs to the MafA family.

The protein resides in the cell outer membrane. The chain is Adhesin MafA 1 (mafA1) from Neisseria meningitidis serogroup A / serotype 4A (strain DSM 15465 / Z2491).